The sequence spans 1642 residues: Cholesterol transporter ABCA5 (1642 aa).

Residues 32-52 (SVQEILFPLFFLFWLILVSMM) form a helical membrane-spanning segment. N-linked (GlcNAc...) asparagine glycosylation is present at asparagine 86. A run of 5 helical transmembrane segments spans residues 220–240 (VILI…AIHI), 264–284 (LSWV…MAVI), 297–317 (IVIF…ALML), 328–348 (GVVE…IVLI), and 355–375 (LVWL…AQVM). Asparagine 388 is a glycosylation site (N-linked (GlcNAc...) asparagine). The chain crosses the membrane as a helical span at residues 396–416 (LIITIIMLALDSVFYVLLAVY). Asparagine 458 carries N-linked (GlcNAc...) asparagine glycosylation. The 236-residue stretch at 478 to 713 (IRISGIQKSY…WGIGYRLSMY (236 aa)) folds into the ABC transporter 1 domain. 514–521 (GHSGTGKS) serves as a coordination point for ATP. A helical membrane pass occupies residues 864-884 (AVLLLLLIFFAVQIFMFFLHH). Asparagine 919 is a glycosylation site (N-linked (GlcNAc...) asparagine). A helical transmembrane segment spans residues 967–987 (VFSAVFNSTMVYCLPVMMNII). Asparagine 996 carries N-linked (GlcNAc...) asparagine glycosylation. 6 helical membrane passes run 1021–1041 (LYFQ…YFAM), 1071–1091 (VVDI…LFAF), 1102–1122 (FLAV…FTYI), 1138–1158 (SFIY…TFFL), 1164–1184 (AVFH…GCLI), and 1207–1227 (LLVA…LLQH). The ABC transporter 2 domain occupies 1290 to 1533 (IMVCNLHKEY…FGKGYFLEIK (244 aa)). Position 1333 to 1340 (1333 to 1340 (GPNGAGKS)) interacts with ATP.

The protein belongs to the ABC transporter superfamily. ABCA family. Post-translationally, N-glycosylated. Expressed in cardiomyocytes, oligodendrocytes and astrocytes in brain, alveolar type 2 cells in lung and follicular cells in the thyroid gland (at protein level). Detected in brain, testis, lung, heart, liver, kidney, skeletal muscle and placenta. Strongly expressed in the basal cells of the seminiferous tubules, interstitial cells consisting of Leydig cells, as well as the tunica albuginea. In the epididymis, specifically and very strongly expressed in the connective tissue outlining the cylindrical epithelium in the corpus and cauda regions, including fibrocytes and smooth muscle cells, as well as within the basal and tall columnar cells of the corpus cylindrical epithelium. Highly expressed in the brain with high expression in cortical and hippocampal neurons and moderately in the lung.

It localises to the golgi apparatus membrane. Its subcellular location is the lysosome membrane. It is found in the late endosome membrane. The protein resides in the cell membrane. It carries out the reaction cholesterol(in) + ATP + H2O = cholesterol(out) + ADP + phosphate + H(+). Its function is as follows. Cholesterol efflux transporter in macrophages that is responsible for APOAI/high-density lipoproteins (HDL) formation at the plasma membrane under high cholesterol levels and participates in reverse cholesterol transport. May play a role in the processing of autolysosomes. The sequence is that of Cholesterol transporter ABCA5 from Mus musculus (Mouse).